Here is a 250-residue protein sequence, read N- to C-terminus: DNA polymerase sliding clamp (250 aa).

This sequence belongs to the PCNA family. As to quaternary structure, homotrimer. The subunits circularize to form a toroid; DNA passes through its center. Replication factor C (RFC) is required to load the toroid on the DNA.

Functionally, sliding clamp subunit that acts as a moving platform for DNA processing. Responsible for tethering the catalytic subunit of DNA polymerase and other proteins to DNA during high-speed replication. This Methanococcus maripaludis (strain C7 / ATCC BAA-1331) protein is DNA polymerase sliding clamp.